The primary structure comprises 121 residues: uncharacterized protein (121 aa).

Disordered stretches follow at residues 24–43 and 100–121; these read SGRT…GRGG and DHEN…TDQR.

This is an uncharacterized protein from Homo sapiens (Human).